A 381-amino-acid chain; its full sequence is MSSQAFTSVHPNAATSDVNVTIDTFVAKLKRRQVQGSYAIALETLQLLMRFISAARWNHVNDLIEQIRDLGNSLEKAHPTAFSCGNVIRRILAVLRDEVEEDTMSTTVTSTSVAEPLISSMFNLLQKPEQPHQNRKNSSGSSSMKTKTDYRQVAIQGIKDLIDEIKNIDEGIQQIAIDLIHDHEILLTPTPDSKTVLKFLITARERSNRTFTVLVTEGFPNNTKNAHEFAKKLAQHNIETLVVPDSAVFALMSRVGKVIIGTKAVFVNGGTISSNSGVSSVCECAREFRTPVFAVAGLYKLSPLYPFDVEKFVEFGGSQRILPRMDPRKRLDTVNQITDYVPPENIDIYITNVGGFNPSFIYRIAWDNYKQIDVHLDKNKA.

Residues 125–148 are disordered; that stretch reads LQKPEQPHQNRKNSSGSSSMKTKT. The segment covering 136–145 has biased composition (polar residues); it reads KNSSGSSSMK.

The protein belongs to the eIF-2B alpha/beta/delta subunits family. As to quaternary structure, component of the translation initiation factor 2B (eIF2B) complex which is a heterodecamer of two sets of five different subunits: alpha, beta, gamma, delta and epsilon. Subunits alpha, beta and delta comprise a regulatory subcomplex and subunits epsilon and gamma comprise a catalytic subcomplex. Within the complex, the hexameric regulatory complex resides at the center, with the two heterodimeric catalytic subcomplexes bound on opposite sides.

The protein resides in the cytoplasm. The protein localises to the cytosol. Acts as a component of the translation initiation factor 2B (eIF2B) complex, which catalyzes the exchange of GDP for GTP on the eukaryotic initiation factor 2 (eIF2) complex gamma subunit. Its guanine nucleotide exchange factor activity is repressed when bound to eIF2 complex phosphorylated on the alpha subunit, thereby limiting the amount of methionyl-initiator methionine tRNA available to the ribosome and consequently global translation is repressed. It activates the synthesis of GCN4 in yeast under amino acid starvation conditions by suppressing the inhibitory effects of multiple AUG codons present in the leader of GCN4 mRNA. It may promote either repression or activation of GCN4 expression depending on amino acid availability. GCD6 and GCD7 repress GCN4 expression at the translational level by ensuring that ribosomes which have translated UORF1 will reinitiate at UORF2, -3, or -4 and thus fail to reach the GCN4 start site. The sequence is that of Translation initiation factor eIF2B subunit beta (GCD7) from Saccharomyces cerevisiae (strain ATCC 204508 / S288c) (Baker's yeast).